Consider the following 760-residue polypeptide: Pentatricopeptide repeat-containing protein At1g20230 (760 aa).

PPR repeat units follow at residues 49–79 (DGYI…IPDP), 80–114 (TIYS…GLIP), 115–149 (DSHV…GLDM), 150–180 (DAFV…MSDK), 181–215 (DVVT…GIEA), 216–250 (NIVS…GFCP), 251–285 (DQVT…GLLK), 286–316 (DKCV…FEMM), 317–351 (EAGV…TMEL), 352–386 (NVVS…GVKP), 387–421 (NHVT…HLLD), 422–452 (NVHV…MPTK), 453–487 (NLVC…RLKP), 488–523 (DFIS…GIKP), and 524–554 (RLEH…MPFE). Residues 559–634 (VWGALLNSCR…NPGCSWIQVK (76 aa)) are type E motif. Positions 635–665 (NRVYTLLAGDKSHPQIDQITEKMDEISKEMR) are type E(+) motif. A type DYW motif region spans residues 666-760 (KSGHRPNLDF…DGICSCGDFW (95 aa)).

The protein belongs to the PPR family. PCMP-H subfamily.

In Arabidopsis thaliana (Mouse-ear cress), this protein is Pentatricopeptide repeat-containing protein At1g20230 (PCMP-H21).